A 441-amino-acid polypeptide reads, in one-letter code: Peroxisomal biogenesis factor 3 (441 aa).

At 1–17 (MAPNQRSRSLLQRHRGK) the chain is on the peroxisomal side. The helical transmembrane segment at 18-39 (VLISLTGIAALFTTGSVVVFFV) threads the bilayer. Residues 40–441 (KRWLYKQQLR…GVSSSFSFKP (402 aa)) lie on the Cytoplasmic side of the membrane.

It belongs to the peroxin-3 family. In terms of assembly, interacts with MSP1; leading to inhibit the translocase activity of MSP1.

It localises to the peroxisome membrane. Functionally, involved in peroxisome biosynthesis. Acts as a regulator of MSP1 by inhibiting the ability of MSP1 to unfold target proteins. This chain is Peroxisomal biogenesis factor 3 (PEX3), found in Saccharomyces cerevisiae (strain ATCC 204508 / S288c) (Baker's yeast).